Here is a 355-residue protein sequence, read N- to C-terminus: MNIYRYEENPLITPLDVKPIHEGFEVIGAFNGGVAEYNGEVLLLLRVAEKPVSEDPEIVLAPVYNAKNKELELQSFRLDDENYDFEDPRMIRSKAKLEGFSYLTSLSYIRIARSKDGHHFTLDEKPFLYPFNEYQTFGIEDARVTQIGDTYHVNFSAVSEFGVADALVTTKDFENLEYQGNIFAPENKDVLIFPEKINGKYYALHRPSLKSIGNLDIWIASSPDLRSFGDHRHLLGIRPGEYDSGRVGGGCVPIKTEEGWLILYHGATEENRYVMGAALLDLNDPTIVLKRTKTPILEPVADYEKNGFFGDVVFACGAIQEGDTLHMYYGVADTSMAGCDMKISEILHQLEVEAK.

Residues asparagine 31, arginine 46, arginine 89, 140–141 (ED), lysine 188, tyrosine 273, and aspartate 333 each bind beta-D-Manp-(1-&gt;2)-beta-D-Manp-(1-&gt;2)-D-Manp.

It belongs to the glycosyl hydrolase 130 family. In terms of assembly, homodimer.

It carries out the reaction beta-D-mannopyranosyl-(1-&gt;2)-D-mannopyranose + phosphate = alpha-D-mannose 1-phosphate + D-mannose. Functionally, catalyzes the reversible phosphorolysis of 1,2-beta-oligomannan. In phosphorolytic reactions, prefers beta-1,2-mannobiose (beta-1,2-Man2) as substrate, but can also use beta-1,2-mannotriose. This Listeria innocua serovar 6a (strain ATCC BAA-680 / CLIP 11262) protein is Beta-1,2-mannobiose phosphorylase.